The sequence spans 660 residues: Interferon-induced GTP-binding protein Mx1 (660 aa).

Position 1 is an N-acetylmethionine (M1). Residues 1–10 are compositionally biased toward basic and acidic residues; the sequence is MVHSEAKMTR. The tract at residues 1-29 is disordered; sequence MVHSEAKMTRPDSASASKQQLLNGNADIQ. The segment covering 12-29 has biased composition (polar residues); the sequence is DSASASKQQLLNGNADIQ. Positions 67-340 constitute a Dynamin-type G domain; the sequence is DLALPAIAVI…LITHISKSLP (274 aa). Positions 77–84 are G1 motif; the sequence is GDQSSGKS. Position 77–84 (77–84) interacts with GTP; sequence GDQSSGKS. The segment at 102–104 is G2 motif; it reads VTR. The interval 178-181 is G3 motif; sequence DLPG. Residues 178–182 and 247–250 contribute to the GTP site; these read DLPGI and TKPD. The G4 motif stretch occupies residues 247–250; sequence TKPD. A G5 motif region spans residues 279 to 282; sequence KCRG. The segment at 341 to 366 is bundle signaling element (BSE); the sequence is LLENQIKESYQNLSDELQKYGTDIPE. The tract at residues 366–533 is middle domain; the sequence is EDETEKTFFL…HFQMEKIVYC (168 aa). Residues 367–630 are stalk; it reads DETEKTFFLI…RDTYDWLLKE (264 aa). Positions 554–557 are critical for lipid-binding; it reads KKKK. In terms of domain architecture, GED spans 572-660; sequence MAEILEHLNA…ARRRLAKFPG (89 aa).

Belongs to the TRAFAC class dynamin-like GTPase superfamily. Dynamin/Fzo/YdjA family. Homooligomer. Oligomerizes into multimeric filamentous or ring-like structures by virtue of its stalk domain. Oligomerization is critical for GTPase activity, protein stability, and recognition of viral target structures. Interacts with TRPC1, TRPC3, TRPC4, TRPC5, TRPC6 and TRPC7. Interacts with HSPA5. Interacts with TUBB/TUBB5. Interacts with DDX39A and DDX39B. In terms of processing, ISGylated.

It localises to the cytoplasm. It is found in the endoplasmic reticulum membrane. The protein localises to the perinuclear region. Its function is as follows. Interferon-induced dynamin-like GTPase with antiviral activity. The chain is Interferon-induced GTP-binding protein Mx1 (MX1) from Equus caballus (Horse).